The sequence spans 1411 residues: DNA-directed RNA polymerase subunit beta' (1411 aa).

The Zn(2+) site is built by C69, C71, C84, and C87. 3 residues coordinate Mg(2+): D461, D463, and D465. The Zn(2+) site is built by C809, C883, C890, and C893.

Belongs to the RNA polymerase beta' chain family. In terms of assembly, the RNAP catalytic core consists of 2 alpha, 1 beta, 1 beta' and 1 omega subunit. When a sigma factor is associated with the core the holoenzyme is formed, which can initiate transcription. Requires Mg(2+) as cofactor. The cofactor is Zn(2+).

It catalyses the reaction RNA(n) + a ribonucleoside 5'-triphosphate = RNA(n+1) + diphosphate. Functionally, DNA-dependent RNA polymerase catalyzes the transcription of DNA into RNA using the four ribonucleoside triphosphates as substrates. The polypeptide is DNA-directed RNA polymerase subunit beta' (Ehrlichia ruminantium (strain Gardel)).